The chain runs to 485 residues: UDP-N-acetylmuramate--L-alanine ligase (485 aa).

Position 120–126 (120–126 (GSHGKTT)) interacts with ATP.

The protein belongs to the MurCDEF family.

It is found in the cytoplasm. It carries out the reaction UDP-N-acetyl-alpha-D-muramate + L-alanine + ATP = UDP-N-acetyl-alpha-D-muramoyl-L-alanine + ADP + phosphate + H(+). It participates in cell wall biogenesis; peptidoglycan biosynthesis. Cell wall formation. The chain is UDP-N-acetylmuramate--L-alanine ligase from Rickettsia africae (strain ESF-5).